The sequence spans 139 residues: Large ribosomal subunit protein uL16 (139 aa).

Residues 1–20 (MLIPRRVKHRKQHHPKRRGM) are compositionally biased toward basic residues. The disordered stretch occupies residues 1 to 22 (MLIPRRVKHRKQHHPKRRGMAK).

The protein belongs to the universal ribosomal protein uL16 family. In terms of assembly, part of the 50S ribosomal subunit.

Functionally, binds 23S rRNA and is also seen to make contacts with the A and possibly P site tRNAs. The chain is Large ribosomal subunit protein uL16 from Streptomyces coelicolor (strain ATCC BAA-471 / A3(2) / M145).